A 239-amino-acid chain; its full sequence is Small ribosomal subunit protein uS3 (239 aa).

The KH type-2 domain maps to 39-107; sequence VREFLRKKLA…ATSINIEEIR (69 aa). Residues 215 to 239 form a disordered region; the sequence is TSNTNELSDEKRNRRKPRNANRRKE. Residues 227 to 239 are compositionally biased toward basic residues; that stretch reads NRRKPRNANRRKE.

Belongs to the universal ribosomal protein uS3 family. In terms of assembly, part of the 30S ribosomal subunit. Forms a tight complex with proteins S10 and S14.

Functionally, binds the lower part of the 30S subunit head. Binds mRNA in the 70S ribosome, positioning it for translation. This is Small ribosomal subunit protein uS3 from Dichelobacter nodosus (strain VCS1703A).